We begin with the raw amino-acid sequence, 450 residues long: 3-keto-steroid reductase erg27 (450 aa).

L25, T53, and K59 together coordinate NADP(+). Catalysis depends on proton donor residues S215 and Y238. Residues Y238, K242, and T296 each coordinate NADP(+). K242 functions as the Lowers pKa of active site Tyr in the catalytic mechanism.

Belongs to the short-chain dehydrogenases/reductases (SDR) family. ERG27 subfamily. As to quaternary structure, heterotetramer of erg25, erg26, erg27 and erg28. Erg28 acts as a scaffold to tether erg27 and other 4,4-demethylation-related enzymes, forming a demethylation enzyme complex, in the endoplasmic reticulum.

The protein resides in the endoplasmic reticulum membrane. The protein localises to the lipid droplet. Its pathway is steroid metabolism; ergosterol biosynthesis. Its function is as follows. Sterol-C4-methyl oxidase; part of the third module of ergosterol biosynthesis pathway that includes the late steps of the pathway. Erg27 is a catalytic component of the C-4 demethylation complex that catalyzes the conversion of 4,4-dimethylfecosterol into fecosterol via 4-methylfecosterol. The third module or late pathway involves the ergosterol synthesis itself through consecutive reactions that mainly occur in the endoplasmic reticulum (ER) membrane. Firstly, the squalene synthase erg9 catalyzes the condensation of 2 farnesyl pyrophosphate moieties to form squalene, which is the precursor of all steroids. Squalene synthase is crucial for balancing the incorporation of farnesyl diphosphate (FPP) into sterol and nonsterol isoprene synthesis. Secondly, squalene is converted into lanosterol by the consecutive action of the squalene epoxidase erg1 and the lanosterol synthase erg7. Then, the delta(24)-sterol C-methyltransferase erg6 methylates lanosterol at C-24 to produce eburicol. Eburicol is the substrate of the sterol 14-alpha demethylase encoded by cyp51A and cyp51B, to yield 4,4,24-trimethyl ergosta-8,14,24(28)-trienol. The C-14 reductase erg24 then reduces the C14=C15 double bond which leads to 4,4-dimethylfecosterol. A sequence of further demethylations at C-4, involving the C-4 demethylation complex containing the C-4 methylsterol oxidases erg25A or erg25B, the sterol-4-alpha-carboxylate 3-dehydrogenase erg26 and the 3-keto-steroid reductase erg27, leads to the production of fecosterol via 4-methylfecosterol. The C-8 sterol isomerase erg2 then catalyzes the reaction which results in unsaturation at C-7 in the B ring of sterols and thus converts fecosterol to episterol. The sterol-C5-desaturase erg3B then catalyzes the introduction of a C-5 double bond in the B ring to produce 5-dehydroepisterol. The 2 other sterol-C5-desaturases, erg3A and erg3C, seem to be less important in ergosterol biosynthesis. The C-22 sterol desaturase erg5 further converts 5-dehydroepisterol into ergosta-5,7,22,24(28)-tetraen-3beta-ol by forming the C-22(23) double bond in the sterol side chain. Finally, ergosta-5,7,22,24(28)-tetraen-3beta-ol is substrate of the C-24(28) sterol reductases erg4A and erg4B to produce ergosterol. Possible alternative sterol biosynthetic pathways might exist from fecosterol to ergosterol, depending on the activities of the erg3 isoforms. This chain is 3-keto-steroid reductase erg27, found in Aspergillus fumigatus (strain ATCC MYA-4609 / CBS 101355 / FGSC A1100 / Af293) (Neosartorya fumigata).